We begin with the raw amino-acid sequence, 162 residues long: Regulatory protein RecX (162 aa).

The protein belongs to the RecX family.

Its subcellular location is the cytoplasm. Modulates RecA activity. The polypeptide is Regulatory protein RecX (Xanthomonas axonopodis pv. citri (strain 306)).